We begin with the raw amino-acid sequence, 519 residues long: Cytochrome P450 52E1 (519 aa).

The next 2 membrane-spanning stretches (helical) occupy residues 10–30 and 44–64; these read ALGG…FYFI and VIVF…TAML. Residue cysteine 479 coordinates heme.

Belongs to the cytochrome P450 family. It depends on heme as a cofactor.

It is found in the membrane. Together with an NADPH cytochrome P450 the enzyme system catalyzes the terminal hydroxylation as the first step in the assimilation of alkanes and fatty acids. The chain is Cytochrome P450 52E1 (CYP52E1) from Candida apicola (Yeast).